A 361-amino-acid polypeptide reads, in one-letter code: Histidinol-phosphate aminotransferase (361 aa).

Lys219 is modified (N6-(pyridoxal phosphate)lysine).

This sequence belongs to the class-II pyridoxal-phosphate-dependent aminotransferase family. Histidinol-phosphate aminotransferase subfamily. As to quaternary structure, homodimer. Pyridoxal 5'-phosphate is required as a cofactor.

It catalyses the reaction L-histidinol phosphate + 2-oxoglutarate = 3-(imidazol-4-yl)-2-oxopropyl phosphate + L-glutamate. The protein operates within amino-acid biosynthesis; L-histidine biosynthesis; L-histidine from 5-phospho-alpha-D-ribose 1-diphosphate: step 7/9. This Cereibacter sphaeroides (strain ATCC 17029 / ATH 2.4.9) (Rhodobacter sphaeroides) protein is Histidinol-phosphate aminotransferase.